A 1147-amino-acid polypeptide reads, in one-letter code: Cellulose synthase-like protein D3 (1147 aa).

2 disordered regions span residues 1–33 (MSTG…PAGQ) and 259–281 (KLGG…PFKP). 2 stretches are compositionally biased toward gly residues: residues 14 to 29 (GGVG…GPRG) and 262 to 272 (GDGGGGGGGGP). 2 helical membrane passes run 292–312 (VISP…FYLT) and 322–342 (ALWL…SWLL). Residues D422 and D847 contribute to the active site. 6 consecutive transmembrane segments (helical) span residues 929 to 949 (IFLL…FFIV), 954 to 974 (IAFL…GILE), 1001 to 1021 (LYAV…SFTL), 1045 to 1065 (LLIP…FAFA), 1075 to 1095 (WGKF…LNPF), and 1108 to 1128 (TIVF…WVAI).

Belongs to the glycosyltransferase 2 family. Plant cellulose synthase-like D subfamily.

It localises to the golgi apparatus membrane. Thought to be a Golgi-localized beta-glycan synthase that polymerize the backbones of noncellulosic polysaccharides (hemicelluloses) of plant cell wall. The sequence is that of Cellulose synthase-like protein D3 (CSLD3) from Oryza sativa subsp. japonica (Rice).